A 286-amino-acid chain; its full sequence is ATP synthase gamma chain (286 aa).

It belongs to the ATPase gamma chain family. As to quaternary structure, F-type ATPases have 2 components, CF(1) - the catalytic core - and CF(0) - the membrane proton channel. CF(1) has five subunits: alpha(3), beta(3), gamma(1), delta(1), epsilon(1). CF(0) has three main subunits: a, b and c.

It is found in the cell inner membrane. In terms of biological role, produces ATP from ADP in the presence of a proton gradient across the membrane. The gamma chain is believed to be important in regulating ATPase activity and the flow of protons through the CF(0) complex. This Shewanella pealeana (strain ATCC 700345 / ANG-SQ1) protein is ATP synthase gamma chain.